Consider the following 386-residue polypeptide: Erythronate-4-phosphate dehydrogenase (386 aa).

Substrate is bound by residues Ser-59 and Thr-81. An NAD(+)-binding site is contributed by Asp-162. Arg-239 is a catalytic residue. Residue Asp-262 participates in NAD(+) binding. Glu-267 is an active-site residue. His-284 (proton donor) is an active-site residue. Gly-287 is an NAD(+) binding site. Residue Tyr-288 participates in substrate binding.

Belongs to the D-isomer specific 2-hydroxyacid dehydrogenase family. PdxB subfamily. Homodimer.

It localises to the cytoplasm. The enzyme catalyses 4-phospho-D-erythronate + NAD(+) = (R)-3-hydroxy-2-oxo-4-phosphooxybutanoate + NADH + H(+). The protein operates within cofactor biosynthesis; pyridoxine 5'-phosphate biosynthesis; pyridoxine 5'-phosphate from D-erythrose 4-phosphate: step 2/5. Its function is as follows. Catalyzes the oxidation of erythronate-4-phosphate to 3-hydroxy-2-oxo-4-phosphonooxybutanoate. The polypeptide is Erythronate-4-phosphate dehydrogenase (Psychrobacter cryohalolentis (strain ATCC BAA-1226 / DSM 17306 / VKM B-2378 / K5)).